Here is a 105-residue protein sequence, read N- to C-terminus: Large ribosomal subunit protein uL24 (105 aa).

This sequence belongs to the universal ribosomal protein uL24 family. In terms of assembly, part of the 50S ribosomal subunit.

Functionally, one of two assembly initiator proteins, it binds directly to the 5'-end of the 23S rRNA, where it nucleates assembly of the 50S subunit. In terms of biological role, one of the proteins that surrounds the polypeptide exit tunnel on the outside of the subunit. In Aliivibrio salmonicida (strain LFI1238) (Vibrio salmonicida (strain LFI1238)), this protein is Large ribosomal subunit protein uL24.